The chain runs to 394 residues: Beta-ketothiolase BktB (394 aa).

The active-site Acyl-thioester intermediate is cysteine 90. Residues histidine 350 and cysteine 380 each act as proton acceptor in the active site.

It belongs to the thiolase-like superfamily. Thiolase family.

It catalyses the reaction an acyl-CoA + acetyl-CoA = a 3-oxoacyl-CoA + CoA. It carries out the reaction 2 acetyl-CoA = acetoacetyl-CoA + CoA. Its function is as follows. Required for efficient production of poly(beta-hydroxybutyrate-co-beta-hydroxyvalerate) (PHBV). Catalyzes the condensation of acetyl-CoA and propionyl-CoA to form beta-ketovaleryl-CoA, and the condensation of two acetyl-CoA molecules to form acetoacetyl-CoA. This chain is Beta-ketothiolase BktB (bktB), found in Cupriavidus necator (strain ATCC 17699 / DSM 428 / KCTC 22496 / NCIMB 10442 / H16 / Stanier 337) (Ralstonia eutropha).